The primary structure comprises 337 residues: Terpene synthase 4 (337 aa).

The Mg(2+) site is built by aspartate 94 and aspartate 98. Positions 94-98 (DDIFD) match the D(D/E)XX(D/E) motif motif. Position 195 (arginine 195) interacts with substrate. The Mg(2+) site is built by asparagine 241, serine 245, and glutamate 249. The NSE motif signature appears at 241–249 (NDIYSYHRE). Positions 320–327 (WSESCTRY) match the WxxxxxRY motif motif.

Belongs to the terpene synthase family. Mg(2+) is required as a cofactor.

It catalyses the reaction (2E,6E)-farnesyl diphosphate = alpha-muurolene + diphosphate. It carries out the reaction (2E,6E)-farnesyl diphosphate = (-)-(E)-beta-caryophyllene + diphosphate. In terms of biological role, terpene synthase that catalyzes the cyclization of farnesyl diphosphate (FPP) into alpha-muurolene, (-)-beta-caryophyllene, and one unidentified sesquiterpene. TPS4 shows only trace monoterpene synthase activity with geranyl diphosphate (GPP) as substrate and produces very small amounts of myrcene. P.polycephalum has a unique biology and these volatile terpenoids could function in internal communication of P.polycephalum, to mark the territory that have been explored, or they may be involved in chemotaxis. The chain is Terpene synthase 4 from Physarum polycephalum (Slime mold).